The sequence spans 431 residues: Putative transcription factor R429 (431 aa).

Residues 28–95 (NKFENMSKAL…SIENCSESLD (68 aa)) are a coiled coil. Residues 142–187 (SQQENSSESNNDIVKNGTGGSTSKRKKIQPSNRCSGSKTGKVTETK) are disordered. Residues 143-152 (QQENSSESNN) show a composition bias toward low complexity. The span at 170–181 (QPSNRCSGSKTG) shows a compositional bias: polar residues. Residues 218–241 (CSVPDCDGEKILNQNDGYMVCKKC) fold into a zinc finger.

It belongs to the nucleo-cytoplasmic large DNA viruses (NCLDVs) VLTF-3 family.

Functionally, putative transcription factor. The protein is Putative transcription factor R429 of Acanthamoeba polyphaga (Amoeba).